Here is a 420-residue protein sequence, read N- to C-terminus: Uteroferrin-associated basic protein 2 (420 aa).

The first 25 residues, 1–25 (MSHGKMPLVLSLVLILCGLFNSISC), serve as a signal peptide directing secretion. 3 N-linked (GlcNAc...) asparagine glycosylation sites follow: Asn225, Asn271, and Asn343.

This sequence belongs to the serpin family. UTMP subfamily.

It is found in the secreted. Its subcellular location is the extracellular space. The protein is Uteroferrin-associated basic protein 2 of Sus scrofa (Pig).